Here is a 265-residue protein sequence, read N- to C-terminus: Small ribosomal subunit protein uS5 (265 aa).

A compositionally biased stretch (low complexity) spans 1–25 (MADTTTAAQADQKPTRAFGAGRPQR). Residues 1–49 (MADTTTAAQADQKPTRAFGAGRPQRGAGGAPQRGGPRPQRGGQGETKSW) form a disordered region. At Ala2 the chain carries N-acetylalanine. An S5 DRBM domain is found at 89–152 (LKDEVMKIVP…VAAKLSVIPV (64 aa)).

Belongs to the universal ribosomal protein uS5 family.

In terms of biological role, component of the ribosome, a large ribonucleoprotein complex responsible for the synthesis of proteins in the cell. The small ribosomal subunit (SSU) binds messenger RNAs (mRNAs) and translates the encoded message by selecting cognate aminoacyl-transfer RNA (tRNA) molecules. The large subunit (LSU) contains the ribosomal catalytic site termed the peptidyl transferase center (PTC), which catalyzes the formation of peptide bonds, thereby polymerizing the amino acids delivered by tRNAs into a polypeptide chain. The nascent polypeptides leave the ribosome through a tunnel in the LSU and interact with protein factors that function in enzymatic processing, targeting, and the membrane insertion of nascent chains at the exit of the ribosomal tunnel. Plays a role in the assembly and function of the 40S ribosomal subunit. Mutations in this protein affects the control of translational fidelity. Involved in nucleolar processing of pre-18S ribosomal RNA and ribosome assembly. The protein is Small ribosomal subunit protein uS5 (rps2) of Dictyostelium discoideum (Social amoeba).